The following is a 409-amino-acid chain: uncharacterized protein (409 aa).

The N-acetyltransferase domain maps to 3-162 (TDVRVLRQDD…DDVRLRYAVP (160 aa)). Residues 82 to 84 (VSV), 90 to 95 (RRGVLT), and 118 to 119 (SE) each bind acetyl-CoA. The Proton donor role is filled by tyrosine 123. The Proton acceptor; via carboxylate role is filled by phenylalanine 409.

It belongs to the acetyltransferase Eis family. As to quaternary structure, homohexamer; trimer of dimers.

This is an uncharacterized protein from Streptomyces avermitilis (strain ATCC 31267 / DSM 46492 / JCM 5070 / NBRC 14893 / NCIMB 12804 / NRRL 8165 / MA-4680).